The following is a 309-amino-acid chain: Thioredoxin reductase (309 aa).

35-42 contributes to the FAD binding site; it reads EKQFPGGK. C134 and C137 form a disulfide bridge. 277–286 lines the FAD pocket; sequence DIVDKNVRQI.

It belongs to the class-II pyridine nucleotide-disulfide oxidoreductase family. As to quaternary structure, homodimer. FAD is required as a cofactor.

It localises to the cytoplasm. The enzyme catalyses [thioredoxin]-dithiol + NADP(+) = [thioredoxin]-disulfide + NADPH + H(+). The protein is Thioredoxin reductase (trxB) of Ureaplasma parvum serovar 3 (strain ATCC 700970).